We begin with the raw amino-acid sequence, 547 residues long: Vacuolar fusion protein MON1 homolog B (547 aa).

Position 1 is an N-acetylmethionine (M1). Over residues 1–15 the composition is skewed to low complexity; the sequence is MEVGGDTAAPAPGGA. Residues 1–106 form a disordered region; sequence MEVGGDTAAP…GGDPSDEEWR (106 aa). S59 and S61 each carry phosphoserine.

This sequence belongs to the MON1/SAND family. As to quaternary structure, interacts with CCNT2; down-regulates CCNT2-mediated activation of viral promoters during herpes simplex virus 1/HHV-1 infection. Found in a complex with RMC1, CCZ1 MON1A and MON1B.

The sequence is that of Vacuolar fusion protein MON1 homolog B (MON1B) from Homo sapiens (Human).